Here is an 888-residue protein sequence, read N- to C-terminus: Serine/threonine-protein phosphatase 1 regulatory subunit 10 (888 aa).

The segment at 1-348 is interaction with TOX4; that stretch reads MGSGPIDPKE…EPAPPAEPMD (348 aa). Residues 73-147 enclose the TFIIS N-terminal domain; it reads KLLNNWLTYS…SDWMAVIRSQ (75 aa). Disordered regions lie at residues 147-213, 247-270, 306-400, and 534-853; these read QSST…STGL, SATA…NTAP, KKKK…KTVT, and VETL…HGGD. Composition is skewed to basic and acidic residues over residues 153–166 and 174–196; these read AEKD…EGKS and PLTE…EKPK. Lys-179 participates in a covalent cross-link: Glycyl lysine isopeptide (Lys-Gly) (interchain with G-Cter in SUMO2). The span at 248 to 258 shows a compositional bias: low complexity; it reads ATAAPGDAAPP. A Glycyl lysine isopeptide (Lys-Gly) (interchain with G-Cter in SUMO2) cross-link involves residue Lys-262. Position 313 is a phosphoserine (Ser-313). A compositionally biased stretch (polar residues) spans 325-334; the sequence is KTSTEQSTAK. The residue at position 382 (Ser-382) is a Phosphoserine. The necessary for interaction with PPP1CA stretch occupies residues 388–417; that stretch reads QLTRKGRKRKTVTWPEEGKLREYFYFELDE. The interval 393–408 is necessary for interaction with PPP1CC; that stretch reads GRKRKTVTWPEEGKLR. Positions 394–423 match the PP1-binding motif motif; that stretch reads RKRKTVTWPEEGKLREYFYFELDETERVNV. Position 398 is a phosphothreonine (Thr-398). Residues 418-619 are interaction with WDR82; it reads TERVNVNKIK…LKQMLVPHGL (202 aa). A compositionally biased stretch (gly residues) spans 540 to 551; that stretch reads GGSGGSPDGAGG. Phosphoserine is present on residues Ser-545 and Ser-591. Residues 583 to 595 show a composition bias toward polar residues; it reads EILTSIMGSPNSH. Residues 596 to 611 are compositionally biased toward basic and acidic residues; that stretch reads PSEELLKQPDYSDKLK. Residues 644–655 are compositionally biased toward pro residues; sequence PPGPGGPMPGPH. Arg-665 is modified (omega-N-methylarginine). The span at 674–690 shows a compositional bias: low complexity; the sequence is RGGDPFWDGPGDPMRGG. An omega-N-methylarginine mark is found at Arg-693 and Arg-737. Gly residues-rich tracts occupy residues 724–762 and 784–794; these read ARGG…GSMG and GPGGNMGGSGG. Residues 811–851 are compositionally biased toward basic and acidic residues; it reads PHDVPSHRGHDHRGPPPHEHRGHDGHGGGGHRGHDGGHSHG. The C3H1-type zinc-finger motif lies at 854-882; sequence MSNRPVCRHFMMKGNCRYENNCAFYHPGV.

As to quaternary structure, component of the PNUTS-PP1 complex (also named PTW/PP1 complex), composed of PPP1R10/PNUTS, TOX4, WDR82, and PPP1CA (or PPP1CB or PPP1CC). In terms of processing, phosphorylated on Ser-398 by PKA within the region necessary for interaction with PPP1CA.

It localises to the nucleus. It is found in the chromosome. In terms of biological role, substrate-recognition component of the PNUTS-PP1 protein phosphatase complex, a protein phosphatase 1 (PP1) complex that promotes RNA polymerase II transcription pause-release, allowing transcription elongation. Promoter-proximal pausing by RNA polymerase II is a transcription halt following transcription initiation but prior to elongation, which acts as a checkpoint to control that transcripts are favorably configured for transcriptional elongation. The PNUTS-PP1 complex mediates the release of RNA polymerase II from promoter-proximal region of genes by catalyzing dephosphorylation of proteins involved in transcription, such as AFF4, CDK9, MEPCE, INTS12, NCBP1, POLR2M/GDOWN1 and SUPT6H. The PNUTS-PP1 complex also regulates RNA polymerase II transcription termination by mediating dephosphorylation of SUPT5H in termination zones downstream of poly(A) sites, thereby promoting deceleration of RNA polymerase II transcription. PNUTS-PP1 complex is also involved in the response to replication stress by mediating dephosphorylation of POLR2A at 'Ser-5' of the CTD, promoting RNA polymerase II degradation. The PNUTS-PP1 complex also plays a role in the control of chromatin structure and cell cycle progression during the transition from mitosis into interphase. PNUTS-PP1 complex mediates dephosphorylation of MYC, promoting MYC stability by preventing MYC ubiquitination by the SCF(FBXW7) complex. In addition to acts as a substrate-recognition component, PPP1R10/PNUTS also acts as a nuclear targeting subunit for the PNUTS-PP1 complex. In some context, PPP1R10/PNUTS also acts as an inhibitor of protein phosphatase 1 (PP1) activity by preventing access to substrates, such as RB. In Mus musculus (Mouse), this protein is Serine/threonine-protein phosphatase 1 regulatory subunit 10.